The chain runs to 92 residues: 11 kDa excretory-secretory protein (92 aa).

The chain is 11 kDa excretory-secretory protein from Trichostrongylus colubriformis (Black scour worm).